The primary structure comprises 276 residues: Large ribosomal subunit protein uL2 (276 aa).

Disordered stretches follow at residues 1-60 (MSIK…RHKR) and 226-276 (NAVD…KRNQ). Residues 20 to 31 (SKEEITREEPEK) are compositionally biased toward basic and acidic residues. Composition is skewed to basic residues over residues 50–60 (STRRQGGRHKR) and 258–276 (KTRR…KRNQ).

This sequence belongs to the universal ribosomal protein uL2 family. Part of the 50S ribosomal subunit. Forms a bridge to the 30S subunit in the 70S ribosome.

Functionally, one of the primary rRNA binding proteins. Required for association of the 30S and 50S subunits to form the 70S ribosome, for tRNA binding and peptide bond formation. It has been suggested to have peptidyltransferase activity; this is somewhat controversial. Makes several contacts with the 16S rRNA in the 70S ribosome. This Natranaerobius thermophilus (strain ATCC BAA-1301 / DSM 18059 / JW/NM-WN-LF) protein is Large ribosomal subunit protein uL2.